Reading from the N-terminus, the 546-residue chain is MAAKEIIFSDVARSKLVEGVNILANAVKVTLGPKGRNVVLERSFGSPVVTKDGVSVAKEIELPDRVQNIGAQLVKEVASRTSDAAGDGTTTATVLAQAIVREGQKYVAAGLNPLDLKRGIDKAVVAAIDELKKISKPTTTSKEIAQVATISANGEESIGQRIAEAIDRVGKEGVITVEDGKSLDDELDVVEGLQFDRGYLSPYFINDQDKQVAVLDNPYVLLHDKKVSNIRDLLPVLEQVAKASRPLLIIAEDVEGEALATLVVNNIRGILKTVAVKAPGFGDRRKALLEDIAILTGGQVIAEETGLTLEKATLAELGQAKRIEVGKENTTVIDGAGEHKNIEARVKQIRAQIDEASSDYDREKLQERVAKLAGGVAVIKVGGATEIEVKEKKDRVDDALHATRAAVEEGIVPGGGVALIRVRNAISGLKGANADQDAGIKIVLRALEEPLRQIVTNAGEEASVVVAKVAEGSGNFGYNAQTGEYGDLVESGVLDPTKVTRTALQNAASVAALLLTTDATVYEAPKDPAPATSAAGPGAPGAGYDF.

ATP is bound by residues 30–33 (TLGP), Lys51, 87–91 (DGTTT), Gly415, and Asp495.

Belongs to the chaperonin (HSP60) family. Forms a cylinder of 14 subunits composed of two heptameric rings stacked back-to-back. Interacts with the co-chaperonin GroES.

The protein resides in the cytoplasm. It carries out the reaction ATP + H2O + a folded polypeptide = ADP + phosphate + an unfolded polypeptide.. Together with its co-chaperonin GroES, plays an essential role in assisting protein folding. The GroEL-GroES system forms a nano-cage that allows encapsulation of the non-native substrate proteins and provides a physical environment optimized to promote and accelerate protein folding. The protein is Chaperonin GroEL 5 of Paraburkholderia xenovorans (strain LB400).